Reading from the N-terminus, the 232-residue chain is Sugar fermentation stimulation protein homolog (232 aa).

This sequence belongs to the SfsA family.

The polypeptide is Sugar fermentation stimulation protein homolog (Geobacter sulfurreducens (strain ATCC 51573 / DSM 12127 / PCA)).